The primary structure comprises 254 residues: Ditrans,polycis-undecaprenyl-diphosphate synthase ((2E,6E)-farnesyl-diphosphate specific) (254 aa).

D25 is a catalytic residue. A Mg(2+)-binding site is contributed by D25. Substrate contacts are provided by residues G26–R29, W30, R38, H42, and S70–E72. The active-site Proton acceptor is the N73. Substrate contacts are provided by W74, R76, and R193. H198 is a binding site for Mg(2+). R199–S201 contributes to the substrate binding site. E212 contacts Mg(2+).

This sequence belongs to the UPP synthase family. As to quaternary structure, homodimer. Requires Mg(2+) as cofactor.

It carries out the reaction 8 isopentenyl diphosphate + (2E,6E)-farnesyl diphosphate = di-trans,octa-cis-undecaprenyl diphosphate + 8 diphosphate. In terms of biological role, catalyzes the sequential condensation of isopentenyl diphosphate (IPP) with (2E,6E)-farnesyl diphosphate (E,E-FPP) to yield (2Z,6Z,10Z,14Z,18Z,22Z,26Z,30Z,34E,38E)-undecaprenyl diphosphate (di-trans,octa-cis-UPP). UPP is the precursor of glycosyl carrier lipid in the biosynthesis of bacterial cell wall polysaccharide components such as peptidoglycan and lipopolysaccharide. This is Ditrans,polycis-undecaprenyl-diphosphate synthase ((2E,6E)-farnesyl-diphosphate specific) from Photorhabdus laumondii subsp. laumondii (strain DSM 15139 / CIP 105565 / TT01) (Photorhabdus luminescens subsp. laumondii).